We begin with the raw amino-acid sequence, 58 residues long: Small ribosomal subunit protein bS21 (58 aa).

A disordered region spans residues 34–58 (KREHYEKPSVKRKKKSEAARKRKFK). A compositionally biased stretch (basic residues) spans 43–58 (VKRKKKSEAARKRKFK).

It belongs to the bacterial ribosomal protein bS21 family.

The sequence is that of Small ribosomal subunit protein bS21 from Clostridium acetobutylicum (strain ATCC 824 / DSM 792 / JCM 1419 / IAM 19013 / LMG 5710 / NBRC 13948 / NRRL B-527 / VKM B-1787 / 2291 / W).